The primary structure comprises 268 residues: uncharacterized protein (268 aa).

Positions 45-64 are disordered; sequence SDTQGPAPGINGQGKPSPGA.

This is an uncharacterized protein from Aquifex aeolicus (strain VF5).